The following is a 413-amino-acid chain: Hemolin (413 aa).

A signal peptide spans 1–18 (MVSKSIVALAACVAMCVA). 4 Ig-like C2-type domains span residues 25 to 112 (PVLK…HIIS), 121 to 215 (PTTF…LVGY), 233 to 322 (PMYV…VKLT), and 327 to 411 (PRFT…TLVI). Intrachain disulfides connect Cys-46-Cys-97, Cys-141-Cys-199, Cys-252-Cys-305, and Cys-349-Cys-395. Residue Asn-283 is glycosylated (N-linked (GlcNAc...) asparagine).

The protein belongs to the hemolin family. Hemolymph.

Its subcellular location is the secreted. Its function is as follows. Insect-immune protein with antimicrobial activity. Forms a protein complex at the bacterial surface. Can inhibit hemocyte aggregation. This chain is Hemolin, found in Manduca sexta (Tobacco hawkmoth).